Reading from the N-terminus, the 379-residue chain is Dual-specificity RNA methyltransferase RlmN (379 aa).

Glu-90 functions as the Proton acceptor in the catalytic mechanism. The region spanning 96 to 348 is the Radical SAM core domain; it reads EPNRGTLCVS…TTVRKTRGDD (253 aa). An intrachain disulfide couples Cys-103 to Cys-353. The [4Fe-4S] cluster site is built by Cys-110, Cys-114, and Cys-117. Residues 179–180, Ser-211, 233–235, and Asn-310 each bind S-adenosyl-L-methionine; these read GE and SLH. Cys-353 functions as the S-methylcysteine intermediate in the catalytic mechanism.

Belongs to the radical SAM superfamily. RlmN family. [4Fe-4S] cluster serves as cofactor.

Its subcellular location is the cytoplasm. The enzyme catalyses adenosine(2503) in 23S rRNA + 2 reduced [2Fe-2S]-[ferredoxin] + 2 S-adenosyl-L-methionine = 2-methyladenosine(2503) in 23S rRNA + 5'-deoxyadenosine + L-methionine + 2 oxidized [2Fe-2S]-[ferredoxin] + S-adenosyl-L-homocysteine. It catalyses the reaction adenosine(37) in tRNA + 2 reduced [2Fe-2S]-[ferredoxin] + 2 S-adenosyl-L-methionine = 2-methyladenosine(37) in tRNA + 5'-deoxyadenosine + L-methionine + 2 oxidized [2Fe-2S]-[ferredoxin] + S-adenosyl-L-homocysteine. Its function is as follows. Specifically methylates position 2 of adenine 2503 in 23S rRNA and position 2 of adenine 37 in tRNAs. m2A2503 modification seems to play a crucial role in the proofreading step occurring at the peptidyl transferase center and thus would serve to optimize ribosomal fidelity. The sequence is that of Dual-specificity RNA methyltransferase RlmN from Nitrosomonas eutropha (strain DSM 101675 / C91 / Nm57).